The sequence spans 364 residues: Histidinol-phosphate aminotransferase 1 (364 aa).

Lys211 carries the post-translational modification N6-(pyridoxal phosphate)lysine.

Belongs to the class-II pyridoxal-phosphate-dependent aminotransferase family. Histidinol-phosphate aminotransferase subfamily. In terms of assembly, homodimer. Pyridoxal 5'-phosphate serves as cofactor.

The enzyme catalyses L-histidinol phosphate + 2-oxoglutarate = 3-(imidazol-4-yl)-2-oxopropyl phosphate + L-glutamate. It participates in amino-acid biosynthesis; L-histidine biosynthesis; L-histidine from 5-phospho-alpha-D-ribose 1-diphosphate: step 7/9. The protein is Histidinol-phosphate aminotransferase 1 of Legionella pneumophila (strain Lens).